We begin with the raw amino-acid sequence, 422 residues long: Synaptotagmin-1 (422 aa).

The Vesicular portion of the chain corresponds to 1-57; the sequence is MVSESHHEALAAPPVTTVATVLPHNATEPASPGEGKEDAFSKLKEKFMNELHKIPLP. An N-linked (GlcNAc...) asparagine glycan is attached at Asn-25. A helical transmembrane segment spans residues 58–80; that stretch reads PWALIAIAIVAVLLVLTCCFCIC. S-palmitoyl cysteine attachment occurs at residues Cys-75, Cys-76, Cys-78, Cys-80, and Cys-83. Residues 81–422 lie on the Cytoplasmic side of the membrane; it reads KKCLFKKKNK…EVDAMLAVKK (342 aa). Residues 113–142 form a disordered region; sequence TMKDQALKDDDAETGLTDGEEKEEPKEEEK. The span at 122-134 shows a compositional bias: acidic residues; that stretch reads DDAETGLTDGEEK. The residue at position 129 (Thr-129) is a Phosphothreonine. The segment at 136-382 is phospholipid binding; that stretch reads EPKEEEKLGK…AIGKVFVGYN (247 aa). Residues 142–261 enclose the C2 1 domain; that stretch reads KLGKLQYSLD…DFGHVTEEWR (120 aa). The Ca(2+) site is built by Leu-172, Asp-173, and Asp-179. Tyr-230 bears the Phosphotyrosine mark. Positions 231, 232, 233, 236, 237, and 239 each coordinate Ca(2+). At Ser-265 the chain carries Phosphoserine. Residues 273–406 form the C2 2 domain; it reads KLGDICFSLR…NPRRPIAQWH (134 aa). Residues Asp-304 and Asp-310 each contribute to the Ca(2+) site. Phosphoserine occurs at positions 343 and 345. Residues Asp-364, Asp-366, and Asp-372 each contribute to the Ca(2+) site.

It belongs to the synaptotagmin family. In terms of assembly, homotetramer. Heterodimer; heterodimerizes with SYT2 in presence of calcium. Interacts with SCAMP5. Interacts with STON2. Forms a complex with SV2B, syntaxin 1 and SNAP25. Interacts with SV2A, SV2B and SV2C. Interacts with RIMS1. Interacts with PRRT2. Interacts with DNAJC5 in a phosphorylation-dependent manner. Interacts (via N-terminus) with RAB3A. Interacts with SYT12. Interacts with calmodulin. Interacts with DNM1 (via C-terminal proline-rich domain (PRD)); this interaction facilitates vesicle fission during clathrin-mediated endocytosis (CME). Requires Ca(2+) as cofactor. Post-translationally, glycosylated.

The protein resides in the cytoplasmic vesicle. It is found in the secretory vesicle membrane. Its subcellular location is the secretory vesicle. It localises to the synaptic vesicle membrane. The protein localises to the chromaffin granule membrane. The protein resides in the cytoplasm. Functionally, calcium sensor that participates in triggering neurotransmitter release at the synapse. May have a regulatory role in the membrane interactions during trafficking of synaptic vesicles at the active zone of the synapse. It binds acidic phospholipids with a specificity that requires the presence of both an acidic head group and a diacyl backbone. A Ca(2+)-dependent interaction between synaptotagmin and putative receptors for activated protein kinase C has also been reported. It can bind to at least three additional proteins in a Ca(2+)-independent manner; these are neurexins, syntaxin and AP2. Plays a role in dendrite formation by melanocytes. The sequence is that of Synaptotagmin-1 from Bos taurus (Bovine).